A 258-amino-acid chain; its full sequence is uncharacterized protein (258 aa).

An N-terminal signal peptide occupies residues 1-19 (MRKIFLPLLLVALSPVAHS).

This is an uncharacterized protein from Escherichia coli (strain K12).